A 572-amino-acid chain; its full sequence is Putative two-component response regulator ARR13 (572 aa).

Residues 17 to 134 enclose the Response regulatory domain; it reads NVMVVDDNRV…DLPKIYQFAL (118 aa). Position 71 is a 4-aspartylphosphate (D71). The disordered stretch occupies residues 175–225; the sequence is KKNCSSKSDTRTVNSTNVSHVSTNGSRKNRKRKPKGGPSDDGESLSQPPKK. Over residues 179-197 the composition is skewed to polar residues; that stretch reads SSKSDTRTVNSTNVSHVST. Positions 224–227 match the Nuclear localization signal motif; that stretch reads KKKK. A DNA-binding region (myb-like GARP) is located at residues 227 to 277; it reads KIWWTNPLQDLFLQAIQHIGYDKVVPKKILAIMNVPYLTRENVASHLQKYR. Residues 509–522 show a composition bias toward polar residues; it reads NQDQSNGESSNTIA. The segment at 509 to 531 is disordered; it reads NQDQSNGESSNTIATPETNTPNF.

Belongs to the ARR family. Type-B subfamily. Binds the target DNA as a monomer. In terms of processing, two-component system major event consists of a His-to-Asp phosphorelay between a sensor histidine kinase (HK) and a response regulator (RR). In plants, the His-to-Asp phosphorelay involves an additional intermediate named Histidine-containing phosphotransfer protein (HPt). This multistep phosphorelay consists of a His-Asp-His-Asp sequential transfer of a phosphate group between first a His and an Asp of the HK protein, followed by the transfer to a conserved His of the HPt protein and finally the transfer to an Asp in the receiver domain of the RR protein.

It is found in the nucleus. Putative transcriptional activator that binds specifically to the DNA sequence 5'-[AG]GATT-3'. Functions as a response regulator involved in His-to-Asp phosphorelay signal transduction system. Phosphorylation of the Asp residue in the receiver domain activates the ability of the protein to promote the transcription of target genes. Could directly activate some type-A response regulators in response to cytokinins. The chain is Putative two-component response regulator ARR13 (ARR13) from Arabidopsis thaliana (Mouse-ear cress).